The following is a 113-amino-acid chain: UPF0482 protein YnfB (113 aa).

The first 28 residues, 1 to 28 (MKITLSKRIGLLAILLPCALALSTTVHA), serve as a signal peptide directing secretion.

It belongs to the UPF0482 family.

The sequence is that of UPF0482 protein YnfB from Escherichia coli O8 (strain IAI1).